Consider the following 68-residue polypeptide: Large ribosomal subunit protein eL24 (68 aa).

Residues Cys-7, Cys-10, Cys-33, and Cys-37 each coordinate Zn(2+). The C4-type zinc-finger motif lies at 7 to 37; that stretch reads CSYCGREFEPGTGKMFVRNDGRVLFFCSSKC.

Belongs to the eukaryotic ribosomal protein eL24 family. In terms of assembly, part of the 50S ribosomal subunit. Forms a cluster with proteins L3 and L14. Requires Zn(2+) as cofactor.

Its function is as follows. Binds to the 23S rRNA. The chain is Large ribosomal subunit protein eL24 from Thermococcus gammatolerans (strain DSM 15229 / JCM 11827 / EJ3).